The chain runs to 453 residues: Gamma-glutamylpolyamine synthetase GlnA2 (453 aa).

A GS beta-grasp domain is found at 15–100 (RDIRFVRLWF…MFCDILMPDG (86 aa)). The region spanning 107–453 (PRYVLKRALA…FELRKSLPVL (347 aa)) is the GS catalytic domain. 2 residues coordinate Mg(2+): Glu130 and Glu132. Glu182 is an ATP binding site. Mg(2+)-binding residues include Glu187 and Glu194. Gly239 provides a ligand contact to L-glutamate. Residue His243 participates in Mg(2+) binding. 245–247 (HLS) provides a ligand contact to ATP. Residues Arg296, Glu310, and Arg322 each coordinate L-glutamate. The ATP site is built by Arg322 and Arg327. Mg(2+) is bound at residue Glu342. Arg344 contributes to the L-glutamate binding site.

It belongs to the glutamine synthetase family. Mg(2+) is required as a cofactor.

It carries out the reaction putrescine + L-glutamate + ATP = gamma-L-glutamylputrescine + ADP + phosphate + H(+). The enzyme catalyses spermine + L-glutamate + ATP = gamma-L-glutamylspermine + ADP + phosphate + H(+). The catalysed reaction is spermidine + L-glutamate + ATP = gamma-L-glutamylspermidine + ADP + phosphate + H(+). It catalyses the reaction cadaverine + L-glutamate + ATP = gamma-L-glutamylcadaverine + ADP + phosphate + H(+). It participates in amine and polyamine degradation; putrescine degradation. Its pathway is amine and polyamine degradation; spermidine degradation. It functions in the pathway amine and polyamine degradation; spermine degradation. With respect to regulation, no effect on activity with glutamine synthetase (GS) inhibitor methionine sulfoximine (MSO). In terms of biological role, involved in the catabolism of polyamines. Catalyzes the ATP-dependent gamma-glutamylation of polyamines. Substrates include putrescine, cadaverine, spermidine and spermine, with a preference for short-chain polyamine putrescine. No complementation of the L-glutamine auxotrophy of an E.coli glnA mutant. Together with GlnA3, enables survival of S.coelicolor under exposure to high local environmental polyamine concentrations, which is toxic to the cells. This Streptomyces coelicolor (strain ATCC BAA-471 / A3(2) / M145) protein is Gamma-glutamylpolyamine synthetase GlnA2.